The chain runs to 142 residues: Protein SprT-like (142 aa).

The 135-residue stretch at 4-138 (YVKKVSIEDF…FACGYCHGRL (135 aa)) folds into the SprT-like domain. Residue His-62 coordinates Zn(2+). Glu-63 is an active-site residue. His-66 contacts Zn(2+).

The protein belongs to the SprT family. Zn(2+) serves as cofactor.

It localises to the cytoplasm. The protein is Protein SprT-like of Streptococcus agalactiae serotype Ia (strain ATCC 27591 / A909 / CDC SS700).